A 78-amino-acid polypeptide reads, in one-letter code: High temperature lethal protein 1 (78 aa).

Position 2 is an N-acetylserine (serine 2).

Interacts directly with RSC8. Component of the two forms of the RSC complex composed of at least either RSC1 or RSC2, and ARP7, ARP9, LDB7, NPL6, RSC3, RSC30, RSC4, RSC58, RSC6, RSC8, RSC9, SFH1, STH1, HTL1 and probably RTT102. The complexes interact with histone and histone variant components of centromeric chromatin. Component of a fungal-specific module (HTL1-LDB7-NPL6-RSC3-RSC30) within the RSC complex.

The protein localises to the nucleus. Functionally, required for cell cycle progression through G2/M transition at temperatures higher than 33 degrees Celsius. Component of the chromatin structure-remodeling complex (RSC), which is involved in transcription regulation and nucleosome positioning. RSC is responsible for the transfer of a histone octamer from a nucleosome core particle to naked DNA. The reaction requires ATP and involves an activated RSC-nucleosome intermediate. Remodeling reaction also involves DNA translocation, DNA twist and conformational change. As a reconfigurer of centromeric and flanking nucleosomes, RSC complex is required both for proper kinetochore function in chromosome segregation and, via a PKC1-dependent signaling pathway, for organization of the cellular cytoskeleton. When associated with the RSC complex, may act coordinately with PKC1 to regulate G2/M transition. Together with LDB7, NPL6, RSC3, RSC30 components, defines a fungal-specific module within the RSC complex that plays a role in many cellular functions including the maintenance of cell wall integrity. The polypeptide is High temperature lethal protein 1 (HTL1) (Saccharomyces cerevisiae (strain ATCC 204508 / S288c) (Baker's yeast)).